The primary structure comprises 318 residues: 1-aminocyclopropane-1-carboxylate oxidase (318 aa).

One can recognise a Fe2OG dioxygenase domain in the interval 153–253 (PNFGTKVANY…RMSIASFYNP (101 aa)). Fe cation-binding residues include histidine 177, aspartate 179, and histidine 234.

It belongs to the iron/ascorbate-dependent oxidoreductase family. Fe cation is required as a cofactor.

The enzyme catalyses 1-aminocyclopropane-1-carboxylate + L-ascorbate + O2 = ethene + L-dehydroascorbate + hydrogen cyanide + CO2 + 2 H2O. Its pathway is alkene biosynthesis; ethylene biosynthesis via S-adenosyl-L-methionine; ethylene from S-adenosyl-L-methionine: step 2/2. The polypeptide is 1-aminocyclopropane-1-carboxylate oxidase (DK-ACO1) (Diospyros kaki (Kaki persimmon)).